The chain runs to 729 residues: Polyphosphate kinase (729 aa).

The tract at residues 1–46 (MTEAQTRTEPSESSESSEAVAPAITSAADSAPEAPPATTAPAIENP) is disordered. The span at 25–42 (TSAADSAPEAPPATTAPA) shows a compositional bias: low complexity. An ATP-binding site is contributed by Asn90. Mg(2+) contacts are provided by Arg422 and Arg452. Catalysis depends on His482, which acts as the Phosphohistidine intermediate. ATP contacts are provided by Tyr515, Arg611, and His639.

This sequence belongs to the polyphosphate kinase 1 (PPK1) family. It depends on Mg(2+) as a cofactor. Post-translationally, an intermediate of this reaction is the autophosphorylated ppk in which a phosphate is covalently linked to a histidine residue through a N-P bond.

The enzyme catalyses [phosphate](n) + ATP = [phosphate](n+1) + ADP. Functionally, catalyzes the reversible transfer of the terminal phosphate of ATP to form a long-chain polyphosphate (polyP). The polypeptide is Polyphosphate kinase (Mycolicibacterium gilvum (strain PYR-GCK) (Mycobacterium gilvum (strain PYR-GCK))).